The primary structure comprises 253 residues: 3-deoxy-manno-octulosonate cytidylyltransferase (253 aa).

It belongs to the KdsB family.

It is found in the cytoplasm. It carries out the reaction 3-deoxy-alpha-D-manno-oct-2-ulosonate + CTP = CMP-3-deoxy-beta-D-manno-octulosonate + diphosphate. It functions in the pathway nucleotide-sugar biosynthesis; CMP-3-deoxy-D-manno-octulosonate biosynthesis; CMP-3-deoxy-D-manno-octulosonate from 3-deoxy-D-manno-octulosonate and CTP: step 1/1. The protein operates within bacterial outer membrane biogenesis; lipopolysaccharide biosynthesis. Functionally, activates KDO (a required 8-carbon sugar) for incorporation into bacterial lipopolysaccharide in Gram-negative bacteria. This is 3-deoxy-manno-octulosonate cytidylyltransferase from Acinetobacter baumannii (strain SDF).